The primary structure comprises 178 residues: Ribosome maturation factor RimM (178 aa).

One can recognise a PRC barrel domain in the interval 100-178 (TDGEYYWYQL…EMKVEWDADF (79 aa)).

This sequence belongs to the RimM family. Binds ribosomal protein uS19.

The protein resides in the cytoplasm. In terms of biological role, an accessory protein needed during the final step in the assembly of 30S ribosomal subunit, possibly for assembly of the head region. Essential for efficient processing of 16S rRNA. May be needed both before and after RbfA during the maturation of 16S rRNA. It has affinity for free ribosomal 30S subunits but not for 70S ribosomes. The chain is Ribosome maturation factor RimM from Pseudomonas fluorescens (strain SBW25).